Consider the following 334-residue polypeptide: Ribosomal lysine N-methyltransferase 5 (334 aa).

S-adenosyl-L-methionine is bound by residues Trp88, 155-157 (GAG), Asp177, Trp227, and Met254.

Belongs to the class I-like SAM-binding methyltransferase superfamily. RKM5 family.

S-adenosyl-L-methionine-dependent protein-lysine N-methyltransferase that methylates 60S ribosomal protein L1. The protein is Ribosomal lysine N-methyltransferase 5 (RKM5) of Lachancea thermotolerans (strain ATCC 56472 / CBS 6340 / NRRL Y-8284) (Yeast).